A 370-amino-acid chain; its full sequence is tRNA-specific 2-thiouridylase MnmA (370 aa).

Residues 11-18 (GMSGGVDS) and M37 each bind ATP. An interaction with target base in tRNA region spans residues 97 to 99 (NPD). Residue C102 is the Nucleophile of the active site. C102 and C199 are disulfide-bonded. G126 provides a ligand contact to ATP. The tract at residues 149-151 (KDQ) is interaction with tRNA. The Cysteine persulfide intermediate role is filled by C199. The tract at residues 307–308 (RY) is interaction with tRNA.

It belongs to the MnmA/TRMU family.

Its subcellular location is the cytoplasm. It catalyses the reaction S-sulfanyl-L-cysteinyl-[protein] + uridine(34) in tRNA + AH2 + ATP = 2-thiouridine(34) in tRNA + L-cysteinyl-[protein] + A + AMP + diphosphate + H(+). Functionally, catalyzes the 2-thiolation of uridine at the wobble position (U34) of tRNA, leading to the formation of s(2)U34. The polypeptide is tRNA-specific 2-thiouridylase MnmA (Staphylococcus saprophyticus subsp. saprophyticus (strain ATCC 15305 / DSM 20229 / NCIMB 8711 / NCTC 7292 / S-41)).